The following is an 870-amino-acid chain: Leucine--tRNA ligase (870 aa).

Positions Pro55–His65 match the 'HIGH' region motif. Positions Lys626–Ser630 match the 'KMSKS' region motif. Lys629 lines the ATP pocket.

It belongs to the class-I aminoacyl-tRNA synthetase family.

The protein localises to the cytoplasm. The enzyme catalyses tRNA(Leu) + L-leucine + ATP = L-leucyl-tRNA(Leu) + AMP + diphosphate. The sequence is that of Leucine--tRNA ligase from Prochlorococcus marinus (strain SARG / CCMP1375 / SS120).